Consider the following 131-residue polypeptide: RutC family protein YjgH (131 aa).

Belongs to the RutC family.

This is RutC family protein YjgH (yjgH) from Escherichia coli (strain K12).